Reading from the N-terminus, the 335-residue chain is Holliday junction branch migration complex subunit RuvB (335 aa).

Residues 4–184 (ADRIISTSAK…FGIVQRLEFY (181 aa)) are large ATPase domain (RuvB-L). Residues isoleucine 23, arginine 24, glycine 65, lysine 68, threonine 69, threonine 70, 131–133 (EDY), arginine 174, tyrosine 184, and arginine 221 contribute to the ATP site. Mg(2+) is bound at residue threonine 69. The segment at 185–255 (AVEDLTSIVA…SAKAALLMLD (71 aa)) is small ATPAse domain (RuvB-S). Residues 258 to 335 (DAGFDYLDRK…RYFGLEKLTE (78 aa)) are head domain (RuvB-H). Positions 294, 313, and 318 each coordinate DNA.

Belongs to the RuvB family. As to quaternary structure, homohexamer. Forms an RuvA(8)-RuvB(12)-Holliday junction (HJ) complex. HJ DNA is sandwiched between 2 RuvA tetramers; dsDNA enters through RuvA and exits via RuvB. An RuvB hexamer assembles on each DNA strand where it exits the tetramer. Each RuvB hexamer is contacted by two RuvA subunits (via domain III) on 2 adjacent RuvB subunits; this complex drives branch migration. In the full resolvosome a probable DNA-RuvA(4)-RuvB(12)-RuvC(2) complex forms which resolves the HJ.

The protein localises to the cytoplasm. It carries out the reaction ATP + H2O = ADP + phosphate + H(+). The RuvA-RuvB-RuvC complex processes Holliday junction (HJ) DNA during genetic recombination and DNA repair, while the RuvA-RuvB complex plays an important role in the rescue of blocked DNA replication forks via replication fork reversal (RFR). RuvA specifically binds to HJ cruciform DNA, conferring on it an open structure. The RuvB hexamer acts as an ATP-dependent pump, pulling dsDNA into and through the RuvAB complex. RuvB forms 2 homohexamers on either side of HJ DNA bound by 1 or 2 RuvA tetramers; 4 subunits per hexamer contact DNA at a time. Coordinated motions by a converter formed by DNA-disengaged RuvB subunits stimulates ATP hydrolysis and nucleotide exchange. Immobilization of the converter enables RuvB to convert the ATP-contained energy into a lever motion, pulling 2 nucleotides of DNA out of the RuvA tetramer per ATP hydrolyzed, thus driving DNA branch migration. The RuvB motors rotate together with the DNA substrate, which together with the progressing nucleotide cycle form the mechanistic basis for DNA recombination by continuous HJ branch migration. Branch migration allows RuvC to scan DNA until it finds its consensus sequence, where it cleaves and resolves cruciform DNA. The chain is Holliday junction branch migration complex subunit RuvB from Pasteurella multocida (strain Pm70).